Reading from the N-terminus, the 460-residue chain is Elongation factor 1-alpha-A (460 aa).

At Gly2 the chain carries N,N,N-trimethylglycine. Lys3 is subject to N6,N6-dimethyllysine; alternate. Lys3 bears the N6-methyllysine; alternate mark. One can recognise a tr-type G domain in the interval 5-240; the sequence is KGHINVVVIG…DSIEPPARPT (236 aa). Positions 14–21 are G1; that stretch reads GHVDSGKS. 14 to 21 is a GTP binding site; it reads GHVDSGKS. Lys30 carries the N6-methyllysine modification. The segment at 70-74 is G2; it reads GITID. Residue Lys79 is modified to N6,N6,N6-trimethyllysine. Positions 91 to 94 are G3; the sequence is DAPG. GTP contacts are provided by residues 91–95 and 153–156; these read DAPGH and NKMD. The interval 153–156 is G4; that stretch reads NKMD. Residues 192–194 form a G5 region; the sequence is SGF. Lys316 carries the N6,N6-dimethyllysine; alternate modification. An N6-methyllysine; alternate modification is found at Lys316. Lys390 bears the N6-methyllysine mark.

This sequence belongs to the TRAFAC class translation factor GTPase superfamily. Classic translation factor GTPase family. EF-Tu/EF-1A subfamily.

Its subcellular location is the cytoplasm. This protein promotes the GTP-dependent binding of aminoacyl-tRNA to the A-site of ribosomes during protein biosynthesis. This is Elongation factor 1-alpha-A (tef101) from Schizosaccharomyces pombe (strain 972 / ATCC 24843) (Fission yeast).